A 453-amino-acid chain; its full sequence is F-box protein SKIP14 (453 aa).

In terms of domain architecture, F-box; degenerate spans 34-104 (RKNTGGDASS…NRQQLFAGLS (71 aa)).

As to quaternary structure, part of a SCF (ASK-cullin-F-box) protein ligase complex. Interacts with CUL1, SKP1A/ASK1 and SPK1B/ASK2.

Its pathway is protein modification; protein ubiquitination. Functionally, component of SCF(ASK-cullin-F-box) E3 ubiquitin ligase complexes, which may mediate the ubiquitination and subsequent proteasomal degradation of target proteins. In Arabidopsis thaliana (Mouse-ear cress), this protein is F-box protein SKIP14 (SKIP14).